Here is a 360-residue protein sequence, read N- to C-terminus: Phospho-N-acetylmuramoyl-pentapeptide-transferase (360 aa).

The next 10 helical transmembrane spans lie at 26-46 (AILGLLTALIFSLWWGPKLIE), 74-94 (MGGLLILAAIFISVLLWGDLG), 97-117 (YVWVMLFVLGSFGLIGFIDDY), 134-154 (YILQSLAALLIAFFLYATAAN), 168-188 (VMPQLGGVFIVLAYFTIVGSS), 199-219 (GLAIMPTVMVAAAFALIAYLS), 236-256 (SGELVIVCTAIVGAGLGFLWF), 263-283 (VFMGDVGSLSLGAALGAIAVL), 288-308 (ILLVIMGGVFVMETVSVILQV), and 338-358 (VIVRFWIISIFLVLLGLATLK).

This sequence belongs to the glycosyltransferase 4 family. MraY subfamily. The cofactor is Mg(2+).

It localises to the cell inner membrane. It catalyses the reaction UDP-N-acetyl-alpha-D-muramoyl-L-alanyl-gamma-D-glutamyl-meso-2,6-diaminopimeloyl-D-alanyl-D-alanine + di-trans,octa-cis-undecaprenyl phosphate = di-trans,octa-cis-undecaprenyl diphospho-N-acetyl-alpha-D-muramoyl-L-alanyl-D-glutamyl-meso-2,6-diaminopimeloyl-D-alanyl-D-alanine + UMP. Its pathway is cell wall biogenesis; peptidoglycan biosynthesis. Functionally, catalyzes the initial step of the lipid cycle reactions in the biosynthesis of the cell wall peptidoglycan: transfers peptidoglycan precursor phospho-MurNAc-pentapeptide from UDP-MurNAc-pentapeptide onto the lipid carrier undecaprenyl phosphate, yielding undecaprenyl-pyrophosphoryl-MurNAc-pentapeptide, known as lipid I. The polypeptide is Phospho-N-acetylmuramoyl-pentapeptide-transferase (Shewanella putrefaciens (strain CN-32 / ATCC BAA-453)).